The chain runs to 738 residues: Protein ALEX (738 aa).

6 disordered regions span residues 1–105 (MSPS…EEAM), 155–188 (REDY…ASHA), 237–350 (TTFP…LPKP), 387–516 (MSGQ…LGQP), 528–578 (GEPG…LDPP), and 611–689 (GMRL…RPRI). Over residues 257-273 (GSTTTPLSIWTAPQSQV) the composition is skewed to polar residues. Residues 279-301 (KSREPQLRASTQRDPHLSDKQPR) show a composition bias toward basic and acidic residues. Positions 387–396 (MSGQNQTEGQ) are enriched in polar residues. 3 stretches are compositionally biased toward pro residues: residues 410–438 (QPPP…PPSQ), 448–467 (PSLP…PRQP), and 476–485 (PGQPPSPLRS). Composition is skewed to low complexity over residues 542–564 (PSLP…LPAG), 615–626 (RPASARSSPPAM), and 656–671 (ATRS…EAAS).

This sequence belongs to the ALEX family. In terms of assembly, interacts with the N-terminal region of the XLas isoforms of guanine nucleotide-binding protein G(s) subunit alpha.

Its subcellular location is the cell membrane. It localises to the cell projection. It is found in the ruffle. Functionally, may inhibit the adenylyl cyclase-stimulating activity of guanine nucleotide-binding protein G(s) subunit alpha which is produced from the same locus in a different open reading frame. The protein is Protein ALEX of Rattus norvegicus (Rat).